We begin with the raw amino-acid sequence, 245 residues long: tRNA pseudouridine synthase A (245 aa).

Residue aspartate 52 is the Nucleophile of the active site. Tyrosine 111 serves as a coordination point for substrate.

Belongs to the tRNA pseudouridine synthase TruA family. In terms of assembly, homodimer.

The catalysed reaction is uridine(38/39/40) in tRNA = pseudouridine(38/39/40) in tRNA. Its function is as follows. Formation of pseudouridine at positions 38, 39 and 40 in the anticodon stem and loop of transfer RNAs. The protein is tRNA pseudouridine synthase A of Rhodopseudomonas palustris (strain BisB18).